The following is a 270-amino-acid chain: MPTDLIRYGSISPEMLAYLWLLIEYKNSIMVAGEVATGKTTLLNAFSLFIPPQMKIVSIEDTPEIRLYHENWIAGTTRSGFGGEEYEITMMDLLKAALRQRPDYLIVGEVRGEEAKILFQAITTGHLALSTIHAKSPEAVIRRLNAEPMNIPKIMLEQLNAICMQVRLIYKGRFVRRTKSITEIVEYDPKIDDIILHDVFRWNPEDDTFEFSGESYLLRRIAEFIGISEKEIINELHSRAEFLRNLCKTKPNFEEFVKKICEYKEYHKGD.

The protein belongs to the GSP E family.

This is an uncharacterized protein from Methanocaldococcus jannaschii (strain ATCC 43067 / DSM 2661 / JAL-1 / JCM 10045 / NBRC 100440) (Methanococcus jannaschii).